The primary structure comprises 1812 residues: Breast cancer type 1 susceptibility protein homolog (1812 aa).

The residue at position 1 (methionine 1) is an N-acetylmethionine. An RING-type zinc finger spans residues 24–65; that stretch reads CPICLELIKEPVSTKCDHIFCKFCMLKLLNQKKGPSQCPLCK. A Glycyl lysine isopeptide (Lys-Gly) (interchain with G-Cter in SUMO2) cross-link involves residue lysine 109. Serine 114 carries the post-translational modification Phosphoserine. The segment covering 165-176 has biased composition (basic residues); it reads KKNRQTQPRKKS. The segment at 165–198 is disordered; sequence KKNRQTQPRKKSVYIELDSDSSEETVTKPGDCSV. Lysine 298 participates in a covalent cross-link: Glycyl lysine isopeptide (Lys-Gly) (interchain with G-Cter in SUMO2). Positions 321 to 332 are enriched in polar residues; the sequence is SKGTCNDRQVPS. The segment at 321 to 362 is disordered; it reads SKGTCNDRQVPSTGEKVGPNADSLSDREKWTHPQSLCPENSG. A Glycyl lysine isopeptide (Lys-Gly) (interchain with G-Cter in SUMO2) cross-link involves residue lysine 336. Residues 352–362 show a composition bias toward polar residues; it reads HPQSLCPENSG. Phosphoserine is present on serine 392. Residues lysine 440, lysine 456, and lysine 512 each participate in a glycyl lysine isopeptide (Lys-Gly) (interchain with G-Cter in SUMO2) cross-link. 2 disordered regions span residues 492–581 and 640–767; these read PFTN…AKSI and SEET…VSDT. A compositionally biased stretch (polar residues) spans 538 to 556; the sequence is QAVSTTSNCQENKIAGSNL. Composition is skewed to basic and acidic residues over residues 557-572 and 669-679; these read QKEKSAHPTESLRKEP and ADAKKNEPNEH. Residues serine 686, serine 706, and serine 717 each carry the phosphoserine modification. Composition is skewed to polar residues over residues 702 to 733 and 758 to 767; these read TSCSSPRKSQGPVNPSPQRTGTEQLETRQMSD and STSVSLVSDT. Residue serine 831 is modified to Phosphoserine. Disordered regions lie at residues 864–899, 947–995, 1030–1056, 1147–1185, and 1205–1230; these read KPRSPQKDCAHSVPSKELSPKVTAKGKQKERQGQEE, GLSA…STEM, VCSTGDSFPGQLGRNRGPKVNTVPPLD, RESSRSPSPVTHASKSQSLHRASRKLESSEESDSTEDED, and CSSAVTQRMPEKAEGTQAPWKGSSSD. The span at 947 to 972 shows a compositional bias: polar residues; that stretch reads GLSATGKSGISQNSHFKQSVSPIRSS. Serine 971 is modified (phosphoserine; by CHEK2). A compositionally biased stretch (basic and acidic residues) spans 973-991; that stretch reads IKTDNRKPLTEGRFERHTS. The residue at position 992 (serine 992) is a Phosphoserine. A Glycyl lysine isopeptide (Lys-Gly) (interchain with G-Cter in SUMO2) cross-link involves residue lysine 1048. Residues 1151 to 1166 show a composition bias toward polar residues; that stretch reads RSPSPVTHASKSQSLH. 4 positions are modified to phosphoserine: serine 1152, serine 1154, serine 1174, and serine 1180. Residues 1175–1185 show a composition bias toward acidic residues; sequence SEESDSTEDED. Serine 1241 is modified (phosphoserine). Residues 1244 to 1289 are disordered; sequence HQFSEDPRCSGSMFSSQHSAAQGSTANANSQDSNFIPPSKQRSHQC. Residues 1255–1279 are compositionally biased toward polar residues; that stretch reads SMFSSQHSAAQGSTANANSQDSNFI. Phosphoserine occurs at positions 1297 and 1303. Residues 1313 to 1323 are compositionally biased toward acidic residues; it reads EEDNDQEEDSI. Positions 1313 to 1343 are disordered; that stretch reads EEDNDQEEDSIIPDSEASGYESETNLSEDCS. A compositionally biased stretch (polar residues) spans 1333-1343; sequence ESETNLSEDCS. Serine 1343 carries the phosphoserine modification. Residue threonine 1350 is modified to Phosphothreonine. The tract at residues 1353-1380 is interaction with PALB2; it reads RATMKYNLIKLQQEMAHLEAVLEQRGNQ. Phosphoserine is present on residues serine 1413, serine 1481, and serine 1495. Residues 1437 to 1547 are disordered; that stretch reads HLEGPTSGDD…AHIGTTPAST (111 aa). Positions 1492–1504 are enriched in polar residues; sequence EASSEPHNSTGQS. The span at 1527 to 1538 shows a compositional bias: basic and acidic residues; it reads RDPESESPKEPA. BRCT domains lie at 1585–1679 and 1698–1797; these read SEER…EFEV and SREK…AYLV.

As to quaternary structure, heterodimer with BARD1. Part of the BRCA1-associated genome surveillance complex (BASC), which contains BRCA1, MSH2, MSH6, MLH1, ATM, BLM, PMS2 and the MRE11-RAD50-NBN protein (MRN) complex. This association could be a dynamic process changing throughout the cell cycle and within subnuclear domains. Component of the BRCA1-A complex, at least composed of BRCA1, BARD1, UIMC1/RAP80, ABRAXAS1, BRCC3/BRCC36, BABAM2 and BABAM1/NBA1. Interacts (via the BRCT domains) with ABRAXAS1 (phosphorylated form); this is important for recruitment to sites of DNA damage. Can form a heterotetramer with two molecules of ABRAXAS1 (phosphorylated form). Component of the BRCA1-RBBP8 complex. Interacts (via the BRCT domains) with RBBP8 ('Ser-327' phosphorylated form); the interaction ubiquitinates RBBP8, regulates CHEK1 activation, and involves RBBP8 in BRCA1-dependent G2/M checkpoint control on DNA damage. Associates with RNA polymerase II holoenzyme. Interacts with SMC1A, NELFB, DCLRE1C, CLSPN. CHEK1, CHEK2, BAP1, BRCC3, UBXN1 and PCLAF. Interacts (via BRCT domains) with BRIP1 (phosphorylated form). Interacts with FANCD2 (ubiquitinated form). Interacts with H2AX (phosphorylated on 'Ser-140'). Interacts (via the BRCT domains) with ACACA (phosphorylated form); the interaction prevents dephosphorylation of ACACA. Part of a BRCA complex containing BRCA1, BRCA2 and PALB2. Interacts directly with PALB2; the interaction is essential for its function in HRR. Interacts directly with BRCA2; the interaction occurs only in the presence of PALB2 which serves as the bridging protein. Interacts (via the BRCT domains) with LMO4; the interaction represses the transcriptional activity of BRCA1. Interacts (via the BRCT domains) with CCAR2 (via N-terminus); the interaction represses the transcriptional activator activity of BRCA1. Interacts with EXD2. Interacts (via C-terminus) with DHX9; this interaction is direct and links BRCA1 to the RNA polymerase II holoenzyme. Interacts with DNA helicase ZGRF1; the interaction is increased following DNA damage induction. Phosphorylated in response to IR, UV, and various stimuli that cause checkpoint activation, probably by ATM or ATR. Phosphorylation at Ser-971 by CHEK2 regulates mitotic spindle assembly. Phosphorylation by AURKA regulates centrosomal microtubule nucleation. Post-translationally, autoubiquitinated, undergoes 'Lys-6'-linked polyubiquitination. 'Lys-6'-linked polyubiquitination does not promote degradation. As to expression, in the embryo, expressed in otic vesicles at day 9.5. At day 10.5, this expression decreases and high levels are found in the neuroectoderm. At days 11-12.5, high levels in differentiating keratinocytes and whisker pad primordia. At days 14-17, expression also observed in kidney epithelial cells. In the adult, highest levels found in spleen, thymus, lymph nodes, epithelial organs, and alveolar and ductal epithelial cells of the mammary gland. Very low levels in brain, kidney, and skin. No expression in heart, liver or lung.

The protein localises to the nucleus. It localises to the chromosome. The protein resides in the cytoplasm. The catalysed reaction is S-ubiquitinyl-[E2 ubiquitin-conjugating enzyme]-L-cysteine + [acceptor protein]-L-lysine = [E2 ubiquitin-conjugating enzyme]-L-cysteine + N(6)-ubiquitinyl-[acceptor protein]-L-lysine.. The protein operates within protein modification; protein ubiquitination. In terms of biological role, E3 ubiquitin-protein ligase that specifically mediates the formation of 'Lys-6'-linked polyubiquitin chains and plays a central role in DNA repair by facilitating cellular responses to DNA damage. It is unclear whether it also mediates the formation of other types of polyubiquitin chains. The BRCA1-BARD1 heterodimer coordinates a diverse range of cellular pathways such as DNA damage repair, ubiquitination and transcriptional regulation to maintain genomic stability. Regulates centrosomal microtubule nucleation. Required for appropriate cell cycle arrests after ionizing irradiation in both the S-phase and the G2 phase of the cell cycle. Required for FANCD2 targeting to sites of DNA damage. Inhibits lipid synthesis by binding to inactive phosphorylated ACACA and preventing its dephosphorylation. Contributes to homologous recombination repair (HRR) via its direct interaction with PALB2, fine-tunes recombinational repair partly through its modulatory role in the PALB2-dependent loading of BRCA2-RAD51 repair machinery at DNA breaks. Component of the BRCA1-RBBP8 complex which regulates CHEK1 activation and controls cell cycle G2/M checkpoints on DNA damage via BRCA1-mediated ubiquitination of RBBP8. Acts as a transcriptional activator. This Mus musculus (Mouse) protein is Breast cancer type 1 susceptibility protein homolog (Brca1).